Here is a 162-residue protein sequence, read N- to C-terminus: CASP-like protein 0U1 (162 aa).

Residues 1-11 lie on the Cytoplasmic side of the membrane; that stretch reads MAAVEAAKTPR. Residues 12–32 traverse the membrane as a helical segment; sequence FILLIIEWVFALVAFAVMGHY. The Extracellular portion of the chain corresponds to 33-43; sequence LFDDRRSSFEY. The chain crosses the membrane as a helical span at residues 44–64; it reads LTAICILVWLVVMIYMVILCC. Residues 65 to 69 lie on the Cytoplasmic side of the membrane; sequence GRALP. Residues 70 to 90 form a helical membrane-spanning segment; sequence PLIEAAIFLLFAILVFIAFLV. Topologically, residues 91–123 are extracellular; it reads TAVKCNNSETIVIAGQTISRKVCEGESEPKAAA. Asn-96 carries an N-linked (GlcNAc...) asparagine glycan. Residues 124–144 form a helical membrane-spanning segment; the sequence is AFAFLLGLLLAGSSVLGCIAF. Topologically, residues 145–162 are cytoplasmic; that stretch reads RRPSAPPLSSFQNPTSSV.

The protein belongs to the Casparian strip membrane proteins (CASP) family. Homodimer and heterodimers.

The protein resides in the cell membrane. The protein is CASP-like protein 0U1 of Chlorokybus atmophyticus (Soil alga).